A 491-amino-acid polypeptide reads, in one-letter code: Ketol-acid reductoisomerase (NADP(+)) (491 aa).

Positions A15–S208 constitute a KARI N-terminal Rossmann domain. NADP(+) contacts are provided by residues C45–Q48, R68, R76, S78, and D108–Q110. H132 is a catalytic residue. G158 contacts NADP(+). 2 KARI C-terminal knotted domains span residues S209 to Q344 and Y345 to M484. The Mg(2+) site is built by D217, E221, E389, and E393. S414 contributes to the substrate binding site.

Belongs to the ketol-acid reductoisomerase family. Requires Mg(2+) as cofactor.

It carries out the reaction (2R)-2,3-dihydroxy-3-methylbutanoate + NADP(+) = (2S)-2-acetolactate + NADPH + H(+). It catalyses the reaction (2R,3R)-2,3-dihydroxy-3-methylpentanoate + NADP(+) = (S)-2-ethyl-2-hydroxy-3-oxobutanoate + NADPH + H(+). It functions in the pathway amino-acid biosynthesis; L-isoleucine biosynthesis; L-isoleucine from 2-oxobutanoate: step 2/4. The protein operates within amino-acid biosynthesis; L-valine biosynthesis; L-valine from pyruvate: step 2/4. Its function is as follows. Involved in the biosynthesis of branched-chain amino acids (BCAA). Catalyzes an alkyl-migration followed by a ketol-acid reduction of (S)-2-acetolactate (S2AL) to yield (R)-2,3-dihydroxy-isovalerate. In the isomerase reaction, S2AL is rearranged via a Mg-dependent methyl migration to produce 3-hydroxy-3-methyl-2-ketobutyrate (HMKB). In the reductase reaction, this 2-ketoacid undergoes a metal-dependent reduction by NADPH to yield (R)-2,3-dihydroxy-isovalerate. This Citrobacter koseri (strain ATCC BAA-895 / CDC 4225-83 / SGSC4696) protein is Ketol-acid reductoisomerase (NADP(+)).